Consider the following 491-residue polypeptide: MKKELLKLSILEAHNCLKRKEFSPTELVEAYIDEMENENLNAFVTKTQDIALEQARKVENLLLQGEKISPLAGMPIGVKDLFCTAGVRTTACSDILKNFVPSYESTISQNLWNNNACMMGKLNMDEFAMGSASSYSCFGPVKNPWKGPYGEDLIPGGSSGGSSAAVAGRLCIAAIGSDTGGSVRQPAALCGIVGAKPTYGRCSRWGMIAFASSLDQAGVLTRTVEDAAIMLQAMCGHDKKDSTSSPVDVPDFLKHISYDIKGKRIGIVREYAIPENKERECVSEMWAANLKYLQDCGAEIVDISLHHTKYALPLYYVIASSEASSNLARYDGVRYGVRREGESIDDMYELTRSLNFGEEVKRRILIGAYALSYGCYDAYYDKSQRVRRRVMQDFDEAFKKVDCILTLTTPRNFIGMDEKLEMIDRYYSDVFTVPASLAGLPAISIPSGLTKHGLPMSLQVIGKHYDEGEIFNVAAVIHKRTGDLLKHLHHF.

Catalysis depends on charge relay system residues K79 and S158. S182 acts as the Acyl-ester intermediate in catalysis.

Belongs to the amidase family. GatA subfamily. As to quaternary structure, heterotrimer of A, B and C subunits.

The enzyme catalyses L-glutamyl-tRNA(Gln) + L-glutamine + ATP + H2O = L-glutaminyl-tRNA(Gln) + L-glutamate + ADP + phosphate + H(+). Allows the formation of correctly charged Gln-tRNA(Gln) through the transamidation of misacylated Glu-tRNA(Gln) in organisms which lack glutaminyl-tRNA synthetase. The reaction takes place in the presence of glutamine and ATP through an activated gamma-phospho-Glu-tRNA(Gln). The polypeptide is Glutamyl-tRNA(Gln) amidotransferase subunit A (Anaplasma phagocytophilum (strain HZ)).